The primary structure comprises 303 residues: Putative S-adenosyl-L-methionine-dependent methyltransferase MAV_4435 (303 aa).

Residues aspartate 129 and 158–159 (DL) contribute to the S-adenosyl-L-methionine site.

The protein belongs to the UPF0677 family.

Functionally, exhibits S-adenosyl-L-methionine-dependent methyltransferase activity. The chain is Putative S-adenosyl-L-methionine-dependent methyltransferase MAV_4435 from Mycobacterium avium (strain 104).